A 236-amino-acid chain; its full sequence is Peptidase E (236 aa).

Catalysis depends on charge relay system residues serine 122, aspartate 137, and histidine 159.

The protein belongs to the peptidase S51 family.

It localises to the cytoplasm. It catalyses the reaction Dipeptidase E catalyzes the hydrolysis of dipeptides Asp-|-Xaa. It does not act on peptides with N-terminal Glu, Asn or Gln, nor does it cleave isoaspartyl peptides.. Its function is as follows. Hydrolyzes dipeptides containing N-terminal aspartate residues. May play a role in allowing the cell to use peptide aspartate to spare carbon otherwise required for the synthesis of the aspartate family of amino acids. The chain is Peptidase E from Shewanella sp. (strain MR-4).